The chain runs to 360 residues: Phosphoserine aminotransferase (360 aa).

R42 is an L-glutamate binding site. Pyridoxal 5'-phosphate-binding residues include W102, T152, D171, and Q194. The residue at position 195 (K195) is an N6-(pyridoxal phosphate)lysine. A pyridoxal 5'-phosphate-binding site is contributed by 237–238; that stretch reads NT.

It belongs to the class-V pyridoxal-phosphate-dependent aminotransferase family. SerC subfamily. In terms of assembly, homodimer. Pyridoxal 5'-phosphate is required as a cofactor.

It is found in the cytoplasm. The catalysed reaction is O-phospho-L-serine + 2-oxoglutarate = 3-phosphooxypyruvate + L-glutamate. It catalyses the reaction 4-(phosphooxy)-L-threonine + 2-oxoglutarate = (R)-3-hydroxy-2-oxo-4-phosphooxybutanoate + L-glutamate. Its pathway is amino-acid biosynthesis; L-serine biosynthesis; L-serine from 3-phospho-D-glycerate: step 2/3. It functions in the pathway cofactor biosynthesis; pyridoxine 5'-phosphate biosynthesis; pyridoxine 5'-phosphate from D-erythrose 4-phosphate: step 3/5. In terms of biological role, catalyzes the reversible conversion of 3-phosphohydroxypyruvate to phosphoserine and of 3-hydroxy-2-oxo-4-phosphonooxybutanoate to phosphohydroxythreonine. The polypeptide is Phosphoserine aminotransferase (Coxiella burnetii (strain RSA 493 / Nine Mile phase I)).